Reading from the N-terminus, the 194-residue chain is Gonadal protein gdl (194 aa).

This sequence belongs to the gonadal family. As to expression, in stage 6-14 egg chamber nurse cells and oocytes of adult females and spermatocyte cysts and bundles of maturing sperm of larval, pupal and adult males.

This is Gonadal protein gdl (gdl) from Drosophila melanogaster (Fruit fly).